Consider the following 154-residue polypeptide: Transcriptional repressor NrdR (154 aa).

The segment at 3 to 34 (CPFCSHNDSKVIDSRPTDEGQAIRRRRECISC) is a zinc-finger region. Residues 49–139 (LIVVKKNGNR…VYREFKDINT (91 aa)) form the ATP-cone domain.

It belongs to the NrdR family. Zn(2+) is required as a cofactor.

In terms of biological role, negatively regulates transcription of bacterial ribonucleotide reductase nrd genes and operons by binding to NrdR-boxes. This Alkaliphilus oremlandii (strain OhILAs) (Clostridium oremlandii (strain OhILAs)) protein is Transcriptional repressor NrdR.